The primary structure comprises 578 residues: Penicillin-binding protein activator LpoA (578 aa).

The signal sequence occupies residues 1–30 (MPTILVQSYGFRQKMKTIFIPTALALLLAA). Cysteine 31 is lipidated: N-palmitoyl cysteine. Cysteine 31 is lipidated: S-diacylglycerol cysteine.

Belongs to the LpoA family. Interacts with PBP1a.

It is found in the cell outer membrane. Its function is as follows. Regulator of peptidoglycan synthesis that is essential for the function of penicillin-binding protein 1A (PBP1a). This is Penicillin-binding protein activator LpoA from Glaesserella parasuis serovar 5 (strain SH0165) (Haemophilus parasuis).